The sequence spans 294 residues: 4-hydroxybenzoate octaprenyltransferase (294 aa).

8 consecutive transmembrane segments (helical) span residues 20–42 (LLRI…ALWL), 98–118 (WEAV…VVLF), 120–140 (NTLT…YPFM), 145–165 (HLPQ…AWAA), 175–195 (WLLF…YAMV), 218–238 (AIIA…GQRA), 242–262 (SFYY…QYLA), and 274–294 (FLNN…DLAF).

Belongs to the UbiA prenyltransferase family. Mg(2+) serves as cofactor.

It is found in the cell inner membrane. The enzyme catalyses all-trans-octaprenyl diphosphate + 4-hydroxybenzoate = 4-hydroxy-3-(all-trans-octaprenyl)benzoate + diphosphate. It participates in cofactor biosynthesis; ubiquinone biosynthesis. In terms of biological role, catalyzes the prenylation of para-hydroxybenzoate (PHB) with an all-trans polyprenyl group. Mediates the second step in the final reaction sequence of ubiquinone-8 (UQ-8) biosynthesis, which is the condensation of the polyisoprenoid side chain with PHB, generating the first membrane-bound Q intermediate 3-octaprenyl-4-hydroxybenzoate. This chain is 4-hydroxybenzoate octaprenyltransferase, found in Marinobacter nauticus (strain ATCC 700491 / DSM 11845 / VT8) (Marinobacter aquaeolei).